The sequence spans 234 residues: Peroxiredoxin (234 aa).

Positions 6–161 (PLIGEKLPEM…ILRLLKALQV (156 aa)) constitute a Thioredoxin domain. The active-site Cysteine sulfenic acid (-SOH) intermediate is the C48. Residue R124 coordinates substrate. C203 and C209 are joined by a disulfide.

It belongs to the peroxiredoxin family. Prx6 subfamily. As to quaternary structure, homodecamer. Pentamer of dimers that assemble into a ring structure.

Its subcellular location is the cytoplasm. The enzyme catalyses a hydroperoxide + [thioredoxin]-dithiol = an alcohol + [thioredoxin]-disulfide + H2O. In terms of biological role, thiol-specific peroxidase that catalyzes the reduction of hydrogen peroxide and organic hydroperoxides to water and alcohols, respectively. Plays a role in cell protection against oxidative stress by detoxifying peroxides. This chain is Peroxiredoxin, found in Ignicoccus hospitalis (strain KIN4/I / DSM 18386 / JCM 14125).